A 213-amino-acid chain; its full sequence is Charged multivesicular body protein 2b (213 aa).

The residue at position 2 (alanine 2) is an N-acetylalanine. Residues 25 to 55 are a coiled coil; sequence QRAIIRDRAALEKQEKQLELEIKKMAKIGNK. Positions 179–194 are enriched in low complexity; the sequence is AKAPSAARSLPSASTS. The tract at residues 179–199 is disordered; it reads AKAPSAARSLPSASTSKATIS. Phosphoserine is present on serine 199. The short motif at 201 to 211 is the MIT-interacting motif element; sequence EEIERQLKALG.

It belongs to the SNF7 family. In terms of assembly, probable core component of the endosomal sorting required for transport complex III (ESCRT-III). ESCRT-III components are thought to multimerize to form a flat lattice on the perimeter membrane of the endosome. Several assembly forms of ESCRT-III may exist that interact and act sequentially. Interacts with CHMP2A. Interacts with VPS4A. Interacts with VPS4B; the interaction is direct. In terms of tissue distribution, widely expressed. Expressed in brain, heart, skeletal muscle, spleen, kidney, liver, small intestine, pancreas, lung, placenta and leukocytes. In brain, it is expressed in cerebellum, cerebral cortex, medulla, spinal cord, occipital lobe, frontal lobe, temporal lobe and putamen.

The protein resides in the cytoplasm. Its subcellular location is the cytosol. It localises to the late endosome membrane. In terms of biological role, probable core component of the endosomal sorting required for transport complex III (ESCRT-III) which is involved in multivesicular bodies (MVBs) formation and sorting of endosomal cargo proteins into MVBs. MVBs contain intraluminal vesicles (ILVs) that are generated by invagination and scission from the limiting membrane of the endosome and mostly are delivered to lysosomes enabling degradation of membrane proteins, such as stimulated growth factor receptors, lysosomal enzymes and lipids. The MVB pathway appears to require the sequential function of ESCRT-O, -I,-II and -III complexes. ESCRT-III proteins mostly dissociate from the invaginating membrane before the ILV is released. The ESCRT machinery also functions in topologically equivalent membrane fission events, such as the terminal stages of cytokinesis and the budding of enveloped viruses (HIV-1 and other lentiviruses). ESCRT-III proteins are believed to mediate the necessary vesicle extrusion and/or membrane fission activities, possibly in conjunction with the AAA ATPase VPS4. This Homo sapiens (Human) protein is Charged multivesicular body protein 2b (CHMP2B).